Consider the following 79-residue polypeptide: Large ribosomal subunit protein bL31 (79 aa).

4 residues coordinate Zn(2+): cysteine 16, cysteine 18, cysteine 37, and cysteine 40.

This sequence belongs to the bacterial ribosomal protein bL31 family. Type A subfamily. In terms of assembly, part of the 50S ribosomal subunit. It depends on Zn(2+) as a cofactor.

Its function is as follows. Binds the 23S rRNA. This chain is Large ribosomal subunit protein bL31, found in Coxiella burnetii (strain CbuG_Q212) (Coxiella burnetii (strain Q212)).